We begin with the raw amino-acid sequence, 156 residues long: Large ribosomal subunit protein bL17 (156 aa).

Positions 127–156 (RATRAAASKKAAEEKAAEAAEEKDEAAEEK) are disordered. Residues 136 to 146 (KAAEEKAAEAA) show a composition bias toward basic and acidic residues. The segment covering 147–156 (EEKDEAAEEK) has biased composition (acidic residues).

It belongs to the bacterial ribosomal protein bL17 family. Part of the 50S ribosomal subunit. Contacts protein L32.

This Corynebacterium urealyticum (strain ATCC 43042 / DSM 7109) protein is Large ribosomal subunit protein bL17.